The chain runs to 776 residues: G protein-regulated inducer of neurite outgrowth 3 (776 aa).

Disordered stretches follow at residues 1-37 (MGTVPDPLRSAKTSLIAASGKEDDLGEPQAASPRHRP) and 68-312 (VCEH…IKEV). Over residues 101–118 (QLPGSSQPAASAPSSAAG) the composition is skewed to low complexity. Composition is skewed to polar residues over residues 129–161 (PANQHTCQSIPGDQPNAITSSMPEDSLMRSQRT) and 193–203 (ETIQGTVQTPV). The span at 208–217 (VVSHSSSPVG) shows a compositional bias: low complexity. A compositionally biased stretch (polar residues) spans 242–274 (SGCSENKQPSVTASGPQGTTSVTPQPTPLTSEP). 2 positions are modified to phosphoserine: Ser-332 and Ser-365. Disordered regions lie at residues 518-637 (ISKA…RPSR) and 723-748 (LIKTQNSQTRRSISSDTSSNKKLRGR). The span at 520–552 (KADHSGSLDPTNKGDAREKKPASPQVVKEKEST) shows a compositional bias: basic and acidic residues. Residues 566–580 (PKSQESGGTESAANP) show a composition bias toward polar residues. Residues 604–620 (SLSLPSDPMGDSSPGSG) are compositionally biased toward low complexity. Over residues 725–742 (KTQNSQTRRSISSDTSSN) the composition is skewed to polar residues.

In terms of biological role, may be involved in neurite outgrowth. The sequence is that of G protein-regulated inducer of neurite outgrowth 3 (GPRIN3) from Homo sapiens (Human).